We begin with the raw amino-acid sequence, 233 residues long: Proteasome subunit beta type-6 (233 aa).

The propeptide at 1–12 (MDLNLDAPHSMG) is removed in mature form. Thr13 serves as the catalytic Nucleophile.

It belongs to the peptidase T1B family. In terms of assembly, component of the 20S core complex of the 26S proteasome. The 26S proteasome is composed of a core protease (CP), known as the 20S proteasome, capped at one or both ends by the 19S regulatory particle (RP/PA700). The 20S proteasome core is composed of 28 subunits that are arranged in four stacked rings, resulting in a barrel-shaped structure. The two end rings are each formed by seven alpha subunits, and the two central rings are each formed by seven beta subunits. The catalytic chamber with the active sites is on the inside of the barrel.

It localises to the cytoplasm. It is found in the nucleus. It carries out the reaction Cleavage of peptide bonds with very broad specificity.. Its function is as follows. The proteasome is a multicatalytic proteinase complex which is characterized by its ability to cleave peptides with Arg, Phe, Tyr, Leu, and Glu adjacent to the leaving group at neutral or slightly basic pH. The proteasome has an ATP-dependent proteolytic activity. The chain is Proteasome subunit beta type-6 (PBA1) from Arabidopsis thaliana (Mouse-ear cress).